Consider the following 351-residue polypeptide: MNVAIVGATGYGGIQAVNLLKKIKKYKISFLGGNKTSGSKWNENFPFIYLDNDPYIEEISVDNISKNADVALLCLPNGLSSTLTRKLLDRGLKVIDLSADYRYKSLDEWKNVYSKEAAIYKRNDDDLCKEAVYGLPEINKEAISKGRLIACPGCYPTSALIPLVPYLSQGIIENEGIVIDSKSGTSGGGREPNQKLLLSECGEGLSAYGLINHRHTSEIEQVASLISGNKIELLFTPHLVPISRGMHSTIYGRLRDPGLTSDDCRILLDNYYRNFKNIKVLPVDTFPSTKWVKNTNQIFLSVKVDIRNGRIIILSAIDNLLKGQTGQAIQNLNLMSGFSMDEGLDLTNNFP.

Residue Cys-154 is part of the active site.

The protein belongs to the NAGSA dehydrogenase family. Type 1 subfamily.

It localises to the cytoplasm. The catalysed reaction is N-acetyl-L-glutamate 5-semialdehyde + phosphate + NADP(+) = N-acetyl-L-glutamyl 5-phosphate + NADPH + H(+). It functions in the pathway amino-acid biosynthesis; L-arginine biosynthesis; N(2)-acetyl-L-ornithine from L-glutamate: step 3/4. Catalyzes the NADPH-dependent reduction of N-acetyl-5-glutamyl phosphate to yield N-acetyl-L-glutamate 5-semialdehyde. The sequence is that of N-acetyl-gamma-glutamyl-phosphate reductase from Prochlorococcus marinus (strain AS9601).